The sequence spans 541 residues: Chaperonin GroEL 2 (541 aa).

ATP contacts are provided by residues 29–32 (TLGP), 86–90 (DGTTT), Gly-413, 476–478 (NAA), and Asp-492.

This sequence belongs to the chaperonin (HSP60) family. In terms of assembly, forms a cylinder of 14 subunits composed of two heptameric rings stacked back-to-back. Interacts with the co-chaperonin GroES.

It is found in the secreted. The protein resides in the capsule. Its subcellular location is the cell surface. It localises to the cell wall. The enzyme catalyses ATP + H2O + a folded polypeptide = ADP + phosphate + an unfolded polypeptide.. Functionally, together with its co-chaperonin GroES, plays an essential role in assisting protein folding. The GroEL-GroES system forms a nano-cage that allows encapsulation of the non-native substrate proteins and provides a physical environment optimized to promote and accelerate protein folding. This is Chaperonin GroEL 2 from Mycobacterium sp. (strain KMS).